Reading from the N-terminus, the 587-residue chain is Cyclic GMP-AMP synthase-like receptor (587 aa).

Disordered stretches follow at residues 26 to 48 (IHPSSADGRGLRPSTDTRGRRDD) and 77 to 229 (TRMH…DRPL). 3 stretches are compositionally biased toward basic and acidic residues: residues 95 to 138 (TRDR…RDSL), 150 to 185 (DGARPETLTPRHEDHERHNSDRDVVKGVAKVQRESL), and 204 to 228 (PESRPAKYKESPKQSRTTEEPHDRP). The Mg(2+) site is built by glutamate 307, aspartate 309, and aspartate 409.

This sequence belongs to the mab-21 family. Mg(2+) is required as a cofactor. The cofactor is Mn(2+).

The catalysed reaction is UTP + ATP = 2',3'-cUAMP + 2 diphosphate. Nucleotidyltransferase that catalyzes the formation of cyclic UMP-AMP (2',3'-cUAMP) from ATP and UTP and plays a key role in innate immunity. Acts as a key sensor of double-stranded DNA (dsDNA), the presence of dsDNA in the cytoplasm being a danger signal that triggers the immune responses. Directly binds dsDNA, activating the nucleotidyltransferase activity, leading to synthesis of 2',3'-cUAMP, a second messenger that binds to and activates Sting, thereby triggering the immune response via activation of the NF-kappa-B transcription factor. This is Cyclic GMP-AMP synthase-like receptor from Magallana gigas (Pacific oyster).